A 224-amino-acid chain; its full sequence is MPGLLLGDEAPNFEADTTQGGIRFHDFLGDSWGILFSHPRDFTPVCTTELGRAAKLAPEFSKRNVKMIALSIDSVPDHLAWSKDINAYNGDQPVEKLPFPIIADKDRELAVKLGMLDPDERDKDGMPLTARVVFIFGPDKKLKLSILYPATTGRNFDEILRVVDSLQLTAYKKVATPVDWKCGDSVMVVPTLPDEEAKKLFPKGVFTKDLPSGKKYLRYTPQPE.

Residues 4–168 form the Thioredoxin domain; that stretch reads LLLGDEAPNF…ILRVVDSLQL (165 aa). A required and sufficient for targeting to lysosomes and lamellar bodies region spans residues 30-39; it reads DSWGILFSHP. Catalysis depends on Cys46, which acts as the Cysteine sulfenic acid (-SOH) intermediate; for peroxidase activity. Residue Tyr88 is modified to Phosphotyrosine. Asp139 acts as the For phospholipase activity in catalysis. At Thr176 the chain carries Phosphothreonine; by MAPK.

Belongs to the peroxiredoxin family. Prx6 subfamily. As to quaternary structure, homodimer. Interacts with GSTP1; mediates PRDX6 glutathionylation and regeneration. Irreversibly inactivated by overoxidation of Cys-46 to sulfinic acid (Cys-SO(2)H) and sulfonic acid (Cys-SO(3)H) forms upon oxidative stress. In terms of processing, phosphorylation at Thr-176 by MAP kinases increases the phospholipase activity of the enzyme. The phosphorylated form exhibits a greater lysophosphatidylcholine acyltransferase activity compared to the non-phosphorylated form.

The protein resides in the cytoplasm. It is found in the lysosome. The enzyme catalyses a hydroperoxide + 2 glutathione = an alcohol + glutathione disulfide + H2O. It carries out the reaction a 1,2-diacyl-sn-glycero-3-phosphocholine + H2O = a 1-acyl-sn-glycero-3-phosphocholine + a fatty acid + H(+). It catalyses the reaction a 1-acyl-sn-glycero-3-phosphocholine + an acyl-CoA = a 1,2-diacyl-sn-glycero-3-phosphocholine + CoA. The catalysed reaction is 1-hexadecanoyl-sn-glycero-3-phosphocholine + hexadecanoyl-CoA = 1,2-dihexadecanoyl-sn-glycero-3-phosphocholine + CoA. The enzyme catalyses 1,2-dihexadecanoyl-sn-glycero-3-phosphocholine + H2O = 1-hexadecanoyl-sn-glycero-3-phosphocholine + hexadecanoate + H(+). In terms of biological role, thiol-specific peroxidase that catalyzes the reduction of hydrogen peroxide and organic hydroperoxides to water and alcohols, respectively. Can reduce H(2)O(2) and short chain organic, fatty acid, and phospholipid hydroperoxides. Also has phospholipase activity, and can therefore either reduce the oxidized sn-2 fatty acyl group of phospholipids (peroxidase activity) or hydrolyze the sn-2 ester bond of phospholipids (phospholipase activity). These activities are dependent on binding to phospholipids at acidic pH and to oxidized phospholipds at cytosolic pH. Plays a role in cell protection against oxidative stress by detoxifying peroxides and in phospholipid homeostasis. Exhibits acyl-CoA-dependent lysophospholipid acyltransferase which mediates the conversion of lysophosphatidylcholine (1-acyl-sn-glycero-3-phosphocholine or LPC) into phosphatidylcholine (1,2-diacyl-sn-glycero-3-phosphocholine or PC). Shows a clear preference for LPC as the lysophospholipid and for palmitoyl CoA as the fatty acyl substrate. This is Peroxiredoxin-6 (PRDX6) from Gallus gallus (Chicken).